Consider the following 259-residue polypeptide: tRNA (guanine-N(7)-)-methyltransferase (259 aa).

Residues Gly-80, Glu-103 to Leu-104, Asn-136 to Ser-137, and Leu-156 contribute to the S-adenosyl-L-methionine site. The active site involves Asp-159. Position 234 to 236 (Thr-234 to Glu-236) interacts with S-adenosyl-L-methionine.

This sequence belongs to the class I-like SAM-binding methyltransferase superfamily. TrmB family.

The protein resides in the nucleus. The catalysed reaction is guanosine(46) in tRNA + S-adenosyl-L-methionine = N(7)-methylguanosine(46) in tRNA + S-adenosyl-L-homocysteine. It functions in the pathway tRNA modification; N(7)-methylguanine-tRNA biosynthesis. Its function is as follows. Catalyzes the formation of N(7)-methylguanine at position 46 (m7G46) in tRNA. The polypeptide is tRNA (guanine-N(7)-)-methyltransferase (Oryza sativa subsp. indica (Rice)).